A 416-amino-acid polypeptide reads, in one-letter code: MSQTLIQQDPEIAEAIRLETERQEYNLEFIASENFVSEQVMEAQGSIMTNKYAEGYPAKRYYGGCEMVDIAERLAIERAKELFGAEHANVQAHSGSQANMAVYFAACKPGDTVLGMNLAHGGHLTHGSPVNFSGKLFNIVSYGVQKETGYIDYEEVERLALEHKPTLLVVGASAYPRTIDFPAFRKIADKVGAKIMVDMAHIAGLVAAGVHPSPVPYAEFVTTTTHKTLRGPRGGMILCREEFAKTIDSNIFPGIQGGPLMHVIAAKAVSFKEALAPEFKEYSTQVVKNAKVLADALVKRGLNLVSGGTDNHLILVDFTGTETTGKMAEKALEKAGITVNKNSVPFETRSPFVTSGIRLGTPATTTRGLKEAEMERVADWVVRALDNMENDTELAAIKGEVREMCKRFPLYAHLLK.

Residues Leu118 and 122–124 each bind (6S)-5,6,7,8-tetrahydrofolate; that span reads GHL. Residue Lys227 is modified to N6-(pyridoxal phosphate)lysine. (6S)-5,6,7,8-tetrahydrofolate-binding positions include Glu242 and 350–352; that span reads SPF.

The protein belongs to the SHMT family. As to quaternary structure, homodimer. Pyridoxal 5'-phosphate is required as a cofactor.

The protein localises to the cytoplasm. The enzyme catalyses (6R)-5,10-methylene-5,6,7,8-tetrahydrofolate + glycine + H2O = (6S)-5,6,7,8-tetrahydrofolate + L-serine. Its pathway is one-carbon metabolism; tetrahydrofolate interconversion. It participates in amino-acid biosynthesis; glycine biosynthesis; glycine from L-serine: step 1/1. Catalyzes the reversible interconversion of serine and glycine with tetrahydrofolate (THF) serving as the one-carbon carrier. This reaction serves as the major source of one-carbon groups required for the biosynthesis of purines, thymidylate, methionine, and other important biomolecules. Also exhibits THF-independent aldolase activity toward beta-hydroxyamino acids, producing glycine and aldehydes, via a retro-aldol mechanism. The polypeptide is Serine hydroxymethyltransferase (Syntrophotalea carbinolica (strain DSM 2380 / NBRC 103641 / GraBd1) (Pelobacter carbinolicus)).